A 561-amino-acid chain; its full sequence is DNA ligase B (561 aa).

The N6-AMP-lysine intermediate role is filled by Lys125.

Belongs to the NAD-dependent DNA ligase family. LigB subfamily.

It carries out the reaction NAD(+) + (deoxyribonucleotide)n-3'-hydroxyl + 5'-phospho-(deoxyribonucleotide)m = (deoxyribonucleotide)n+m + AMP + beta-nicotinamide D-nucleotide.. Functionally, catalyzes the formation of phosphodiester linkages between 5'-phosphoryl and 3'-hydroxyl groups in double-stranded DNA using NAD as a coenzyme and as the energy source for the reaction. The sequence is that of DNA ligase B from Salmonella newport (strain SL254).